The following is a 352-amino-acid chain: MDYSMSTALYDIDYGMSEPCQKIDVKQVAARLLPPLYSLVFIFGFVGNLLVVLILITCKKLKSMTDIYLLNLAISDLLFLLTLPLWAHYAAAEWDFGGAMCKVFTGMYHMGYFGGIFFIILLTIDRYLAIVHAVFALKARTVTFGVVTSGVTWVAAILVSLPDIIFTRSQKEGFRCSCSPHFPASQYQFWKNFHTIMRNILSLVLPLLVMIVCYSGILKTLLRCRNEKRRHRAVRLIFAIMVVYFLFWAPYNVVLLLNTFQEFFGLNNCSSSNRLDRAMQVTETLGMTHCCINPVVYAFVGEKFRSYLSAFFRKHVAKRLCKHCPLLPRETPEPASSVYTRSTGEQEISVGL.

The Extracellular portion of the chain corresponds to 1-30 (MDYSMSTALYDIDYGMSEPCQKIDVKQVAA). Tyrosine 3 carries the post-translational modification Sulfotyrosine. Residue serine 6 is glycosylated (O-linked (GalNAc...) serine). Sulfotyrosine is present on residues tyrosine 10 and tyrosine 14. Serine 17 carries an O-linked (GalNAc...) serine glycan. 2 disulfide bridges follow: cysteine 20–cysteine 269 and cysteine 101–cysteine 178. Residues 31-58 (RLLPPLYSLVFIFGFVGNLLVVLILITC) form a helical membrane-spanning segment. Topologically, residues 59 to 68 (KKLKSMTDIY) are cytoplasmic. The helical transmembrane segment at 69–89 (LLNLAISDLLFLLTLPLWAHY) threads the bilayer. Topologically, residues 90–102 (AAAEWDFGGAMCK) are extracellular. A helical transmembrane segment spans residues 103–124 (VFTGMYHMGYFGGIFFIILLTI). Residues 125-141 (DRYLAIVHAVFALKART) lie on the Cytoplasmic side of the membrane. The chain crosses the membrane as a helical span at residues 142 to 166 (VTFGVVTSGVTWVAAILVSLPDIIF). Residues 167-198 (TRSQKEGFRCSCSPHFPASQYQFWKNFHTIMR) are Extracellular-facing. A helical membrane pass occupies residues 199–218 (NILSLVLPLLVMIVCYSGIL). The Cytoplasmic portion of the chain corresponds to 219–235 (KTLLRCRNEKRRHRAVR). A helical transmembrane segment spans residues 236–260 (LIFAIMVVYFLFWAPYNVVLLLNTF). Topologically, residues 261–277 (QEFFGLNNCSSSNRLDR) are extracellular. Residues 278–301 (AMQVTETLGMTHCCINPVVYAFVG) traverse the membrane as a helical segment. Over 302 to 352 (EKFRSYLSAFFRKHVAKRLCKHCPLLPRETPEPASSVYTRSTGEQEISVGL) the chain is Cytoplasmic. 2 S-palmitoyl cysteine lipidation sites follow: cysteine 321 and cysteine 324. Residues 332–352 (PEPASSVYTRSTGEQEISVGL) are disordered. 4 positions are modified to phosphoserine; by BARK1: serine 336, serine 337, serine 342, and serine 349. Over residues 337 to 346 (SVYTRSTGEQ) the composition is skewed to polar residues.

Belongs to the G-protein coupled receptor 1 family. As to quaternary structure, interacts with PRAF2. Efficient ligand binding to CCL3/MIP-1alpha and CCL4/MIP-1beta requires sulfation, O-glycosylation and sialic acid modifications. Glycosylation on Ser-6 is required for efficient binding of CCL4. Interacts with GRK2. Interacts with ARRB1 and ARRB2. Interacts with CNIH4. Interacts with S100A4; this interaction stimulates T-lymphocyte chemotaxis. Sulfated on at least 2 of the N-terminal tyrosines. Sulfation is required for efficient binding of the chemokines, CCL3 and CCL4. In terms of processing, O-glycosylated, but not N-glycosylated. Ser-6 appears to be the major site. Also sialylated glycans present which contribute to chemokine binding. Ser-17 may also be glycosylated and, if so, with small moieties such as a T-antigen. Post-translationally, palmitoylation in the C-terminal is important for cell surface expression. Phosphorylation on serine residues in the C-terminal is stimulated by binding CC chemokines especially by APO-RANTES.

The protein localises to the cell membrane. Receptor for a number of inflammatory CC-chemokines including CCL3/MIP-1-alpha, CCL4/MIP-1-beta and RANTES and subsequently transduces a signal by increasing the intracellular calcium ion level. May play a role in the control of granulocytic lineage proliferation or differentiation. Participates in T-lymphocyte migration to the infection site by acting as a chemotactic receptor. This Oryctolagus cuniculus (Rabbit) protein is C-C chemokine receptor type 5 (CCR5).